The sequence spans 349 residues: 2-oxoglutarate-Fe(II) type oxidoreductase hxnY (349 aa).

One can recognise a Fe2OG dioxygenase domain in the interval 178-282 (GVATMRMLHY…RYSIPFFFSG (105 aa)). The Fe cation site is built by histidine 205, aspartate 207, and histidine 263. Arginine 273 contacts 2-oxoglutarate.

Belongs to the iron/ascorbate-dependent oxidoreductase family. Fe(2+) serves as cofactor.

2-oxoglutarate-Fe(II) type oxidoreductase, part of the hnx cluster involved in the purine degradation. The nicotinate hydroxylase hnxS accepts nicotinate as a substrate and catalyzes the first step of nicotinate catabolism. The major facilitator-type transporters hxnP and hxnZ are probably involved in the uptake of nicotinate-derived metabolites, and the oxidoreductases hxnT and hxnY in the further metabolism of 6-OH nicotinic acid. In Emericella nidulans (strain FGSC A4 / ATCC 38163 / CBS 112.46 / NRRL 194 / M139) (Aspergillus nidulans), this protein is 2-oxoglutarate-Fe(II) type oxidoreductase hxnY.